A 156-amino-acid polypeptide reads, in one-letter code: Small ribosomal subunit protein uS7 (156 aa).

This sequence belongs to the universal ribosomal protein uS7 family. As to quaternary structure, part of the 30S ribosomal subunit. Contacts proteins S9 and S11.

In terms of biological role, one of the primary rRNA binding proteins, it binds directly to 16S rRNA where it nucleates assembly of the head domain of the 30S subunit. Is located at the subunit interface close to the decoding center, probably blocks exit of the E-site tRNA. The chain is Small ribosomal subunit protein uS7 from Thermodesulfovibrio yellowstonii (strain ATCC 51303 / DSM 11347 / YP87).